A 304-amino-acid chain; its full sequence is Elongation factor Ts (304 aa).

Residues 82-85 (TDFV) are involved in Mg(2+) ion dislocation from EF-Tu.

This sequence belongs to the EF-Ts family.

It localises to the cytoplasm. In terms of biological role, associates with the EF-Tu.GDP complex and induces the exchange of GDP to GTP. It remains bound to the aminoacyl-tRNA.EF-Tu.GTP complex up to the GTP hydrolysis stage on the ribosome. In Symbiobacterium thermophilum (strain DSM 24528 / JCM 14929 / IAM 14863 / T), this protein is Elongation factor Ts.